Reading from the N-terminus, the 35-residue chain is Photosystem II reaction center protein M (35 aa).

A helical transmembrane segment spans residues 7–27 (GFIATILFVLVPTVFLLILYI).

The protein belongs to the PsbM family. PSII is composed of 1 copy each of membrane proteins PsbA, PsbB, PsbC, PsbD, PsbE, PsbF, PsbH, PsbI, PsbJ, PsbK, PsbL, PsbM, PsbT, PsbX, PsbY, PsbZ, Psb30/Ycf12, peripheral proteins PsbO, CyanoQ (PsbQ), PsbU, PsbV and a large number of cofactors. It forms dimeric complexes.

The protein resides in the cellular thylakoid membrane. Functionally, one of the components of the core complex of photosystem II (PSII). PSII is a light-driven water:plastoquinone oxidoreductase that uses light energy to abstract electrons from H(2)O, generating O(2) and a proton gradient subsequently used for ATP formation. It consists of a core antenna complex that captures photons, and an electron transfer chain that converts photonic excitation into a charge separation. This subunit is found at the monomer-monomer interface. The sequence is that of Photosystem II reaction center protein M from Crocosphaera subtropica (strain ATCC 51142 / BH68) (Cyanothece sp. (strain ATCC 51142)).